A 112-amino-acid chain; its full sequence is Ribonuclease P protein component (112 aa).

This sequence belongs to the RnpA family. In terms of assembly, consists of a catalytic RNA component (M1 or rnpB) and a protein subunit.

It catalyses the reaction Endonucleolytic cleavage of RNA, removing 5'-extranucleotides from tRNA precursor.. Its function is as follows. RNaseP catalyzes the removal of the 5'-leader sequence from pre-tRNA to produce the mature 5'-terminus. It can also cleave other RNA substrates such as 4.5S RNA. The protein component plays an auxiliary but essential role in vivo by binding to the 5'-leader sequence and broadening the substrate specificity of the ribozyme. This Pelotomaculum thermopropionicum (strain DSM 13744 / JCM 10971 / SI) protein is Ribonuclease P protein component.